We begin with the raw amino-acid sequence, 186 residues long: Allergen Fel d 4 (186 aa).

The N-terminal stretch at 1-15 (MKLLLLCLGLILVCA) is a signal peptide. Residues asparagine 51 and asparagine 66 are each glycosylated (N-linked (GlcNAc...) asparagine). An intrachain disulfide couples cysteine 81 to cysteine 171.

The protein belongs to the calycin superfamily. Lipocalin family. Abundant in urine (at protein level).

It is found in the secreted. Its function is as follows. May be a pheromone carrier. Acts as a kairomone, detected by the prey vomeronasal organ and inducing fear reactions in mice. In Felis catus (Cat), this protein is Allergen Fel d 4.